The primary structure comprises 311 residues: Mitoferrin (311 aa).

3 Solcar repeats span residues 15 to 102 (HSIP…MKSF), 111 to 195 (EHTL…WQQV), and 202 to 302 (YDPK…FKFM). 6 helical membrane passes run 17 to 36 (IPVH…CVMF), 77 to 96 (GVNA…FTVY), 112 to 132 (HTLA…AVMN), 170 to 189 (SYTT…FMGY), 204 to 223 (PKSH…AVTT), and 277 to 296 (GLQA…WSVY).

Belongs to the mitochondrial carrier (TC 2.A.29) family.

It localises to the mitochondrion inner membrane. In terms of biological role, mitochondrial iron transporter that mediates iron uptake. Probably required for heme synthesis of hemoproteins and Fe-S cluster assembly. The protein is Mitoferrin of Caenorhabditis briggsae.